The chain runs to 983 residues: MMARRTVDFKKLIEQLRARATDKAEALNTVSQLEIGAVDAQDVTASAVRAFVGALPSSGYHFGFVRQNVVFYLLSHATVQTARDPLYAAEQLHEQLDRFLRHQHDGGGDEDRLPFYHNGATLTAFQKLLQTLREIQTVIAEQSGGTAAAADLIASNNASTERRGKKGGSSSGGQQPLVRRVITQLETAATEARPYVNCRAVAELLDLTYQRLIYWACTLMPYVLFRRDTDTELDTVLLMHFFYTHYRSVNGDLAVEFQNYVKNSVRHMSSFVSSDIDGDQKPGAEHMRDVSYKLFVGNLQARDASGLMFPIISTRISTVNLYLSPERMFFHPGLISRLLSEEVSPRANLDAYARVCDRVLEDHLHTPRRVQRLLDLTQMVMRLVELGFNHDTCAAYAQMALIQPASQKSSLFVSEIREKLIQIIYNFYTFFMCLYVYSPTFLFDHRRRLILEQHRSTLIGSKEELQHVWSNVTLNVNTHFAVQYTEEDFEAHTKGATEAEREYLYRDLHSKWGVHLFTLRPSRGAAGAASPLPPLDGVTRSDILRECALVNLNEGRVNYASLLAFSHHPEFPSIFAQLVVVTEFSEIFGIPQGLFQAVGSPRLFALIQLCRVLLPEQVTLYQNLVSIYNLTTFVKHIDAAVFKTVRDCVFDIATTLEHLSGVPVTPNVDLLAELMARSVAHNLYTTVNPLIEDVMRSSAGSLRNYLRHTRLCFGLARGRARLSEDGVTVYVEVQGQYGLRVPTTRFVEQLRELVRRDRLLAENLRGLNERLLSVRVRVRQISSDTEEVSRHAKGHRTVAQMSKALKKTASKIKVLETRVTLALEQAQRSNGAVVTAVQRALAVFDVLSRENLERRGAQLCLTEATSLLHRHRALAPMTWPAGTGVAAAAEADRALREFLEAPWESAPQPPRLRMTPDTDHEESTAGATSVPEVLGARYEPAHLAASDLLNWYIVPVSQAQQDILSSIDPPAGSTSVSLPPASP.

The tract at residues 474–983 (LNVNTHFAVQ…TSVSLPPASP (510 aa)) is interaction with large tegument protein. A disordered region spans residues 901-932 (APWESAPQPPRLRMTPDTDHEESTAGATSVPE). The segment covering 914-923 (MTPDTDHEES) has biased composition (basic and acidic residues).

It belongs to the herpesviridae inner tegument protein family. As to quaternary structure, interacts (via C-terminus) with the large tegument protein/LTP (via N-terminus).

It localises to the virion tegument. Its subcellular location is the host cytoplasm. The protein localises to the host nucleus. It is found in the host Golgi apparatus. The protein resides in the host trans-Golgi network. Its function is as follows. Plays an essential role in cytoplasmic secondary envelopment during viral egress. Interacts with the capsid via the large tegument protein/LTP and participates in its transport to the host trans-Golgi network (TGN) where secondary envelopment occurs. Modulates tegumentation and capsid accumulation at the viral assembly complex. The sequence is that of Inner tegument protein (UL47) from Homo sapiens (Human).